A 194-amino-acid polypeptide reads, in one-letter code: dCTP deaminase (194 aa).

Residues 110–115, Asp-128, 136–138, Tyr-171, Lys-178, and Gln-182 each bind dCTP; these read RSSLAR and VLE. Glu-138 (proton donor/acceptor) is an active-site residue. The segment at 175–194 is disordered; it reads KDAKYKNQQSAVSSRINQDD. The segment covering 180-194 has biased composition (polar residues); that stretch reads KNQQSAVSSRINQDD.

The protein belongs to the dCTP deaminase family. As to quaternary structure, homotrimer.

The enzyme catalyses dCTP + H2O + H(+) = dUTP + NH4(+). It participates in pyrimidine metabolism; dUMP biosynthesis; dUMP from dCTP (dUTP route): step 1/2. Catalyzes the deamination of dCTP to dUTP. The chain is dCTP deaminase from Actinobacillus pleuropneumoniae serotype 5b (strain L20).